The chain runs to 447 residues: Glutamate--tRNA ligase 1 (447 aa).

The short motif at 10–20 (PSPTGMLHVGN) is the 'HIGH' region element. The short motif at 240–244 (KISKR) is the 'KMSKS' region element. An ATP-binding site is contributed by K243.

The protein belongs to the class-I aminoacyl-tRNA synthetase family. Glutamate--tRNA ligase type 1 subfamily. Monomer.

The protein resides in the cytoplasm. The enzyme catalyses tRNA(Glu) + L-glutamate + ATP = L-glutamyl-tRNA(Glu) + AMP + diphosphate. Functionally, catalyzes the attachment of glutamate to tRNA(Glu) in a two-step reaction: glutamate is first activated by ATP to form Glu-AMP and then transferred to the acceptor end of tRNA(Glu). The sequence is that of Glutamate--tRNA ligase 1 from Rickettsia massiliae (strain Mtu5).